The following is a 226-amino-acid chain: Octanoyltransferase (226 aa).

The BPL/LPL catalytic domain occupies 31 to 226 (PETPDALWIC…SQKLGTYLAP (196 aa)). Substrate is bound by residues 70–77 (RGGQVTFH), 159–161 (ALG), and 172–174 (GVA). C190 (acyl-thioester intermediate) is an active-site residue.

Belongs to the LipB family.

The protein resides in the cytoplasm. It carries out the reaction octanoyl-[ACP] + L-lysyl-[protein] = N(6)-octanoyl-L-lysyl-[protein] + holo-[ACP] + H(+). It functions in the pathway protein modification; protein lipoylation via endogenous pathway; protein N(6)-(lipoyl)lysine from octanoyl-[acyl-carrier-protein]: step 1/2. Catalyzes the transfer of endogenously produced octanoic acid from octanoyl-acyl-carrier-protein onto the lipoyl domains of lipoate-dependent enzymes. Lipoyl-ACP can also act as a substrate although octanoyl-ACP is likely to be the physiological substrate. The sequence is that of Octanoyltransferase from Variovorax paradoxus (strain S110).